We begin with the raw amino-acid sequence, 109 residues long: Tyrosine-protein phosphatase 4 (109 aa).

The Tyrosine-protein phosphatase domain occupies Ser1–Ile109. Substrate is bound at residue Glu78.

It belongs to the protein-tyrosine phosphatase family.

It catalyses the reaction O-phospho-L-tyrosyl-[protein] + H2O = L-tyrosyl-[protein] + phosphate. This is Tyrosine-protein phosphatase 4 (STY-4) from Styela plicata (Wrinkled sea squirt).